A 555-amino-acid chain; its full sequence is Transcription factor kojR (555 aa).

The segment at residues 21–47 (CETCKLRKRKCDGHEPCTYCLRYEYQC) is a DNA-binding region (zn(2)-C6 fungal-type). Residues 51–73 (PHPRRKPAASKSSARPSEEEDSP) form a disordered region.

It localises to the nucleus. In terms of biological role, transcription factor that regulates the gene cluster that mediates the biosynthesis of 5-hydroxy-2-hydroxymethyl-1,4-pyrone, also know as kojic acid, a by-product in the fermentation process of malting rice that acts as a chelation agent. Mediates the expression of kojA and kojT via binding of an 11-nucleotide palindromic sequence, 5'-CGRCTWAGYCG-3' (R=A/G, W=A/T, Y=C/T) within the target gene promoters. The chain is Transcription factor kojR from Aspergillus flavus (strain ATCC 200026 / FGSC A1120 / IAM 13836 / NRRL 3357 / JCM 12722 / SRRC 167).